A 541-amino-acid polypeptide reads, in one-letter code: Cytochrome P450 monooxygenase claW (541 aa).

Residues 12–32 (VINALVILFSFWAFLSLIRVI) traverse the membrane as a helical segment. A heme-binding site is contributed by Cys480.

The protein belongs to the cytochrome P450 family. Heme is required as a cofactor.

The protein localises to the membrane. It functions in the pathway secondary metabolite biosynthesis; terpenoid biosynthesis. Functionally, cytochrome P450 monooxygenase; part of the gene cluster that mediates the biosynthesis of clavilactone A, a meroterpenoid that features a unique benzo-fused ten-membered carbocyclic ring unit with an alpha,beta-epoxy-gamma-lactone moiety, forming an intriguing 10/5/3 tricyclic nested skeleton. Cytochrome P450 monooxygenases claO, claP, claQ, claU, and claW are close orthologs, suggesting that a redundant function or pseudogenes are present in the cla cluster. These monoxygenases are not involved in clavilactone A biosynthesis nor its modification. ClaR, ClaS and ClaT are sufficient to produce clavilactone A. The biosynthesis begins with the prenyltransferase claS that transfers geranyl pyrophosphate (GPP) to hydroquinone to produces geranylhydroquinone. The cytochrome P450 monooxygenase claR then catalyzes the diradical coupling reaction between the intramolecular hydroquinone and allyl moieties to form the benzo-fused ten-membered carbocyclic ring unit of wigantol. Finally the cytochrome P450 monooxygenase claT exquisitely and stereoselectively assembles the alpha,beta-epoxy-gamma-lactone moiety, producing clavilactone A via arnebinol A. The sequence is that of Cytochrome P450 monooxygenase claW from Ampulloclitocybe clavipes (Club foot).